A 352-amino-acid chain; its full sequence is tRNA-specific 2-thiouridylase MnmA (352 aa).

ATP contacts are provided by residues 11-18 (AMSGGVDS) and Met37. The Nucleophile role is filled by Cys101. Cys101 and Cys197 form a disulfide bridge. Gly125 contributes to the ATP binding site. Residues 147-149 (KDQ) form an interaction with tRNA region. The active-site Cysteine persulfide intermediate is Cys197. An interaction with tRNA region spans residues 302 to 303 (RY).

It belongs to the MnmA/TRMU family.

Its subcellular location is the cytoplasm. It catalyses the reaction S-sulfanyl-L-cysteinyl-[protein] + uridine(34) in tRNA + AH2 + ATP = 2-thiouridine(34) in tRNA + L-cysteinyl-[protein] + A + AMP + diphosphate + H(+). Catalyzes the 2-thiolation of uridine at the wobble position (U34) of tRNA, leading to the formation of s(2)U34. The sequence is that of tRNA-specific 2-thiouridylase MnmA from Syntrophotalea carbinolica (strain DSM 2380 / NBRC 103641 / GraBd1) (Pelobacter carbinolicus).